Here is a 190-residue protein sequence, read N- to C-terminus: Imidazoleglycerol-phosphate dehydratase (190 aa).

This sequence belongs to the imidazoleglycerol-phosphate dehydratase family.

It is found in the cytoplasm. It catalyses the reaction D-erythro-1-(imidazol-4-yl)glycerol 3-phosphate = 3-(imidazol-4-yl)-2-oxopropyl phosphate + H2O. It functions in the pathway amino-acid biosynthesis; L-histidine biosynthesis; L-histidine from 5-phospho-alpha-D-ribose 1-diphosphate: step 6/9. This Campylobacter hominis (strain ATCC BAA-381 / DSM 21671 / CCUG 45161 / LMG 19568 / NCTC 13146 / CH001A) protein is Imidazoleglycerol-phosphate dehydratase.